The following is a 397-amino-acid chain: Elongation factor Tu (397 aa).

Residues 10–206 form the tr-type G domain; sequence KPHVNIGTIG…AVDTSIPQPE (197 aa). The tract at residues 19-26 is G1; sequence GHIDHGKT. Residue 19–26 coordinates GTP; sequence GHIDHGKT. Thr-26 contacts Mg(2+). The G2 stretch occupies residues 62–66; sequence GITIS. The segment at 83 to 86 is G3; it reads DCPG. Residues 83-87 and 138-141 each bind GTP; these read DCPGH and NKSD. Positions 138-141 are G4; sequence NKSD. Residues 176 to 178 are G5; it reads SAL.

This sequence belongs to the TRAFAC class translation factor GTPase superfamily. Classic translation factor GTPase family. EF-Tu/EF-1A subfamily. As to quaternary structure, monomer.

The protein resides in the cytoplasm. The enzyme catalyses GTP + H2O = GDP + phosphate + H(+). Its function is as follows. GTP hydrolase that promotes the GTP-dependent binding of aminoacyl-tRNA to the A-site of ribosomes during protein biosynthesis. The protein is Elongation factor Tu of Salinispora arenicola (strain CNS-205).